An 84-amino-acid polypeptide reads, in one-letter code: Cell division topological specificity factor (84 aa).

The protein belongs to the MinE family.

Its function is as follows. Prevents the cell division inhibition by proteins MinC and MinD at internal division sites while permitting inhibition at polar sites. This ensures cell division at the proper site by restricting the formation of a division septum at the midpoint of the long axis of the cell. The chain is Cell division topological specificity factor from Pseudomonas putida (strain ATCC 700007 / DSM 6899 / JCM 31910 / BCRC 17059 / LMG 24140 / F1).